A 451-amino-acid polypeptide reads, in one-letter code: MRGEVCHIHIGQAGTQLGNSAWELYLLEHGLGADGRLDPEKGEDINAGGSFETFFTETGSGKYVPRSIFVDLDPSPIDEIRTGPYRQLFHPEQLISGKEDAANNYARGHYTVGKELVDTVVDRVRRLSDNCSSLQGFLVFHSFGGGTGSGFGALLLERLSTEYGKKSKLEFAVYPSPRVSTAVVEPYNAVLSTHSTIENSDCTFLVDNEAVYDICRRNLDIPRPSFEHLNRLIAQVVSSITSSLRFDGALNVDLNEFQTNLVPFPRIHYPLISYAPVISSNRSSHESFKVQDLTLQCAEPNNQMVVCDPRNGKYMAVALLYRGDCVPRDCTQAIASLKAKASFNLVEWCPTGFKVGINYQKPARVPGSELAPVDRSVSMLSNTTAISEAWSRLDHKFDLMYSKRAFVHWYVGEGMEEGEFSEAREDLAALEKDYEEVAGDSLDMEGEEAEY.

The GTP site is built by Gln-12, Asp-73, Ser-142, Gly-146, Thr-147, Thr-181, Asn-208, and Asn-230. Asp-73 contributes to the Mg(2+) binding site. Glu-256 is a catalytic residue.

The protein belongs to the tubulin family. In terms of assembly, dimer of alpha and beta chains. A typical microtubule is a hollow water-filled tube with an outer diameter of 25 nm and an inner diameter of 15 nM. Alpha-beta heterodimers associate head-to-tail to form protofilaments running lengthwise along the microtubule wall with the beta-tubulin subunit facing the microtubule plus end conferring a structural polarity. Microtubules usually have 13 protofilaments but different protofilament numbers can be found in some organisms and specialized cells. It depends on Mg(2+) as a cofactor.

The protein localises to the cytoplasm. It is found in the cytoskeleton. It carries out the reaction GTP + H2O = GDP + phosphate + H(+). Its function is as follows. Tubulin is the major constituent of microtubules, a cylinder consisting of laterally associated linear protofilaments composed of alpha- and beta-tubulin heterodimers. Microtubules grow by the addition of GTP-tubulin dimers to the microtubule end, where a stabilizing cap forms. Below the cap, tubulin dimers are in GDP-bound state, owing to GTPase activity of alpha-tubulin. The sequence is that of Tubulin alpha-2 chain (tubB) from Emericella nidulans (strain FGSC A4 / ATCC 38163 / CBS 112.46 / NRRL 194 / M139) (Aspergillus nidulans).